Here is a 337-residue protein sequence, read N- to C-terminus: ATP-dependent 6-phosphofructokinase (337 aa).

Residue G11 participates in ATP binding. 21–25 lines the ADP pocket; that stretch reads RAVVR. ATP-binding positions include 72-73 and 102-105; these read RY and GDGS. D103 is a Mg(2+) binding site. Substrate is bound at residue 125–127; sequence TID. D127 (proton acceptor) is an active-site residue. Residue R154 participates in ADP binding. Residues R162 and 169 to 171 contribute to the substrate site; that span reads MGR. ADP-binding positions include 185-187, K212, and 214-216; these read GAD and KNH. Residues E223, R245, and 251-254 each bind substrate; that span reads HILR.

Belongs to the phosphofructokinase type A (PFKA) family. ATP-dependent PFK group I subfamily. Prokaryotic clade 'B1' sub-subfamily. Homotetramer. Requires Mg(2+) as cofactor.

The protein localises to the cytoplasm. The catalysed reaction is beta-D-fructose 6-phosphate + ATP = beta-D-fructose 1,6-bisphosphate + ADP + H(+). It functions in the pathway carbohydrate degradation; glycolysis; D-glyceraldehyde 3-phosphate and glycerone phosphate from D-glucose: step 3/4. Allosterically activated by ADP and other diphosphonucleosides, and allosterically inhibited by phosphoenolpyruvate. Its function is as follows. Catalyzes the phosphorylation of D-fructose 6-phosphate to fructose 1,6-bisphosphate by ATP, the first committing step of glycolysis. This Streptococcus pyogenes serotype M1 protein is ATP-dependent 6-phosphofructokinase.